Here is a 254-residue protein sequence, read N- to C-terminus: Receptor expression-enhancing protein 2 (254 aa).

2 consecutive transmembrane segments (helical) span residues 1–21 and 35–55; these read MVSW…YPAY and YVKW…ETLT. The residue at position 152 (Ser152) is a Phosphoserine. The tract at residues 164 to 254 is disordered; sequence ALPLQGPDGR…KKTSAGGDSA (91 aa). The segment covering 195–204 has biased composition (polar residues); the sequence is SVRSGTNQAD. Positions 205-219 are enriched in basic and acidic residues; the sequence is PRTEISEDDTGDKAP.

It belongs to the DP1 family. In terms of assembly, interacts with odorant receptor proteins.

The protein resides in the membrane. In terms of biological role, required for endoplasmic reticulum (ER) network formation, shaping and remodeling. May enhance the cell surface expression of odorant receptors. This is Receptor expression-enhancing protein 2 (REEP2) from Bos taurus (Bovine).